The following is a 360-amino-acid chain: Geranylgeranyl pyrophosphate synthase 3, chloroplastic (360 aa).

The transit peptide at 1–39 directs the protein to the chloroplast; sequence MATTVHLSSFSLFIQSRGRRDNSISSVKSLKKRTGLSPS. The interval 24 to 54 is disordered; the sequence is ISSVKSLKKRTGLSPSSALTSQGGRDMIPPE. Over residues 36 to 46 the composition is skewed to polar residues; that stretch reads LSPSSALTSQG. Lys-106, Arg-109, and His-138 together coordinate isopentenyl diphosphate. Residues Asp-145 and Asp-151 each contribute to the Mg(2+) site. Arg-156 contacts dimethylallyl diphosphate. Arg-157 is an isopentenyl diphosphate binding site. Residues Lys-245, Thr-246, Gln-283, Lys-300, and Lys-310 each contribute to the dimethylallyl diphosphate site.

The protein belongs to the FPP/GGPP synthase family. In terms of assembly, monomer. Mg(2+) serves as cofactor. As to expression, mainly expressed in roots.

It localises to the plastid. It is found in the chloroplast. It catalyses the reaction isopentenyl diphosphate + dimethylallyl diphosphate = (2E)-geranyl diphosphate + diphosphate. It carries out the reaction isopentenyl diphosphate + (2E)-geranyl diphosphate = (2E,6E)-farnesyl diphosphate + diphosphate. The enzyme catalyses isopentenyl diphosphate + (2E,6E)-farnesyl diphosphate = (2E,6E,10E)-geranylgeranyl diphosphate + diphosphate. Its pathway is isoprenoid biosynthesis; farnesyl diphosphate biosynthesis; farnesyl diphosphate from geranyl diphosphate and isopentenyl diphosphate: step 1/1. The protein operates within isoprenoid biosynthesis; geranyl diphosphate biosynthesis; geranyl diphosphate from dimethylallyl diphosphate and isopentenyl diphosphate: step 1/1. It participates in isoprenoid biosynthesis; geranylgeranyl diphosphate biosynthesis; geranylgeranyl diphosphate from farnesyl diphosphate and isopentenyl diphosphate: step 1/1. Its function is as follows. Catalyzes the trans-addition of the three molecules of IPP onto DMAPP to form geranylgeranyl pyrophosphate. In Arabidopsis thaliana (Mouse-ear cress), this protein is Geranylgeranyl pyrophosphate synthase 3, chloroplastic (GGPP3).